Consider the following 457-residue polypeptide: RuvB-like helicase 1 (457 aa).

Residue 73–80 (GGPSTGKT) coordinates ATP.

The protein belongs to the RuvB family. May form heterododecamers with RVB2. Component of the SWR1 chromatin remodeling complex, the INO80 chromatin remodeling complex, and of the R2TP complex.

It localises to the nucleus. The catalysed reaction is ATP + H2O = ADP + phosphate + H(+). In terms of biological role, DNA helicase which participates in several chromatin remodeling complexes, including the SWR1 and the INO80 complexes. The SWR1 complex mediates the ATP-dependent exchange of histone H2A for the H2A variant HZT1 leading to transcriptional regulation of selected genes by chromatin remodeling. The INO80 complex remodels chromatin by shifting nucleosomes and is involved in DNA repair. Also involved in pre-rRNA processing. The protein is RuvB-like helicase 1 (RVB1) of Kluyveromyces lactis (strain ATCC 8585 / CBS 2359 / DSM 70799 / NBRC 1267 / NRRL Y-1140 / WM37) (Yeast).